Consider the following 170-residue polypeptide: Cyclic dof factor 4 (170 aa).

Positions 25–51 are disordered; that stretch reads NEEETHPPEQEATIAVRSSSSSDLTAE. The Dof-type zinc-finger motif lies at 58-112; it reads IACPRCKSMETKFCYFNNYNVNQPRHFCKGCHRYWTAGGALRNVPVGAGRRKSKP. Residues C60, C63, C85, and C88 each contribute to the Zn(2+) site.

Expressed in the vasculature of cotyledons and hypocotyls, leaves and roots.

The protein resides in the nucleus. Its function is as follows. Transcription factor that binds specifically to a 5'-AA[AG]G-3' consensus core sequence. Transcriptional repressor of 'CONSTANS' expression. Regulates a photoperiodic flowering response. The protein is Cyclic dof factor 4 (CDF4) of Arabidopsis thaliana (Mouse-ear cress).